We begin with the raw amino-acid sequence, 239 residues long: MLVIPAIDLQSGRCVRLKQGRFDQVTQFSVFPIERALHFAKLGAKRLHVVDLDGARSGKMQQLELICSMQKTGIPIQAGGGIRSIEQALECSNAGISQLVIGSLAITNPDLTIQIIEKIKPENIVLALDVRVDTKVPLLAINGWQNNSTSSLWEVVSYYENYGIKNILCTDIACDGMMNGPNFDLYQQAVEYFPQIAWQASGGVRHMQDITTLNSLGISAVILGLMLYQDNVNFEELLC.

D8 acts as the Proton acceptor in catalysis. D129 acts as the Proton donor in catalysis.

Belongs to the HisA/HisF family.

Its subcellular location is the cytoplasm. It catalyses the reaction 1-(5-phospho-beta-D-ribosyl)-5-[(5-phospho-beta-D-ribosylamino)methylideneamino]imidazole-4-carboxamide = 5-[(5-phospho-1-deoxy-D-ribulos-1-ylimino)methylamino]-1-(5-phospho-beta-D-ribosyl)imidazole-4-carboxamide. It participates in amino-acid biosynthesis; L-histidine biosynthesis; L-histidine from 5-phospho-alpha-D-ribose 1-diphosphate: step 4/9. The chain is 1-(5-phosphoribosyl)-5-[(5-phosphoribosylamino)methylideneamino] imidazole-4-carboxamide isomerase from Legionella pneumophila (strain Paris).